Consider the following 45-residue polypeptide: Large ribosomal subunit protein bL34 (45 aa).

A disordered region spans residues 1–27 (MTKRTLGGTSRKRKRVSGFRVRMRTHT). Residues 10-27 (SRKRKRVSGFRVRMRTHT) are compositionally biased toward basic residues.

Belongs to the bacterial ribosomal protein bL34 family.

The sequence is that of Large ribosomal subunit protein bL34 from Prochlorococcus marinus (strain MIT 9211).